A 282-amino-acid polypeptide reads, in one-letter code: Large ribosomal subunit protein uL2 (282 aa).

2 disordered regions span residues K31–I54 and L223–R282. Basic residues-rich tracts occupy residues T34–I54 and V270–R282.

The protein belongs to the universal ribosomal protein uL2 family. In terms of assembly, part of the 50S ribosomal subunit. Forms a bridge to the 30S subunit in the 70S ribosome.

Its function is as follows. One of the primary rRNA binding proteins. Required for association of the 30S and 50S subunits to form the 70S ribosome, for tRNA binding and peptide bond formation. It has been suggested to have peptidyltransferase activity; this is somewhat controversial. Makes several contacts with the 16S rRNA in the 70S ribosome. The protein is Large ribosomal subunit protein uL2 of Anaeromyxobacter dehalogenans (strain 2CP-1 / ATCC BAA-258).